The sequence spans 292 residues: Phosphatidylserine decarboxylase proenzyme (292 aa).

Catalysis depends on charge relay system; for autoendoproteolytic cleavage activity residues Asp-89, His-146, and Ser-252. Residue Ser-252 is the Schiff-base intermediate with substrate; via pyruvic acid; for decarboxylase activity of the active site. Ser-252 carries the post-translational modification Pyruvic acid (Ser); by autocatalysis.

It belongs to the phosphatidylserine decarboxylase family. PSD-B subfamily. Prokaryotic type I sub-subfamily. As to quaternary structure, heterodimer of a large membrane-associated beta subunit and a small pyruvoyl-containing alpha subunit. It depends on pyruvate as a cofactor. Post-translationally, is synthesized initially as an inactive proenzyme. Formation of the active enzyme involves a self-maturation process in which the active site pyruvoyl group is generated from an internal serine residue via an autocatalytic post-translational modification. Two non-identical subunits are generated from the proenzyme in this reaction, and the pyruvate is formed at the N-terminus of the alpha chain, which is derived from the carboxyl end of the proenzyme. The autoendoproteolytic cleavage occurs by a canonical serine protease mechanism, in which the side chain hydroxyl group of the serine supplies its oxygen atom to form the C-terminus of the beta chain, while the remainder of the serine residue undergoes an oxidative deamination to produce ammonia and the pyruvoyl prosthetic group on the alpha chain. During this reaction, the Ser that is part of the protease active site of the proenzyme becomes the pyruvoyl prosthetic group, which constitutes an essential element of the active site of the mature decarboxylase.

The protein localises to the cell membrane. The enzyme catalyses a 1,2-diacyl-sn-glycero-3-phospho-L-serine + H(+) = a 1,2-diacyl-sn-glycero-3-phosphoethanolamine + CO2. It functions in the pathway phospholipid metabolism; phosphatidylethanolamine biosynthesis; phosphatidylethanolamine from CDP-diacylglycerol: step 2/2. Catalyzes the formation of phosphatidylethanolamine (PtdEtn) from phosphatidylserine (PtdSer). The chain is Phosphatidylserine decarboxylase proenzyme from Shewanella baltica (strain OS223).